A 456-amino-acid chain; its full sequence is Glycine receptor subunit alpha-4 (456 aa).

Positions 1-27 are cleaved as a signal peptide; it reads MTTLVPASLFLLLWTLPGKVLLSVALA. Residues 28–256 lie on the Extracellular side of the membrane; sequence KEDVKSGLKG…KFHLERQMGY (229 aa). The N-linked (GlcNAc...) asparagine glycan is linked to Asn-71. Cystine bridges form between Cys-171–Cys-185 and Cys-232–Cys-243. 236–241 contributes to the strychnine binding site; sequence YNTGKF. A helical membrane pass occupies residues 257-278; sequence YLIQMYIPSLLIVILSWVSFWI. Residues 279–283 lie on the Cytoplasmic side of the membrane; the sequence is NMDAA. Residues 284–304 form a helical membrane-spanning segment; sequence PARVGLGITTVLTMTTQSSGS. Topologically, residues 305 to 315 are extracellular; that stretch reads RASLPKVSYVK. The helical transmembrane segment at 316–336 threads the bilayer; it reads AIDIWMAVCLLFVFAALLEYA. Residues 337–423 lie on the Cytoplasmic side of the membrane; that stretch reads AVNFVSRQHK…YVDRAKRIDT (87 aa). A helical transmembrane segment spans residues 424–444; it reads ISRAVFPFTFLVFNIFYWVVY. The Extracellular portion of the chain corresponds to 445 to 456; it reads KVLRSEDIHQAL.

This sequence belongs to the ligand-gated ion channel (TC 1.A.9) family. Glycine receptor (TC 1.A.9.3) subfamily. GLRA4 sub-subfamily. Homopentamer (in vitro). Heteropentamer composed of GLRA4 and GLRB. Detected in the retina inner plexiform layer, especially at the border between layer three and four (at protein level).

It is found in the postsynaptic cell membrane. It localises to the synapse. Its subcellular location is the perikaryon. The protein resides in the cell projection. The protein localises to the dendrite. It is found in the cell membrane. It carries out the reaction chloride(in) = chloride(out). Inhibited by strychnine. Functionally, glycine receptors are ligand-gated chloride channels. Channel opening is triggered by extracellular glycine. Channel opening is also triggered by taurine and beta-alanine. Plays a role in the down-regulation of neuronal excitability. Contributes to the generation of inhibitory postsynaptic currents. In Mus musculus (Mouse), this protein is Glycine receptor subunit alpha-4 (Glra4).